A 296-amino-acid chain; its full sequence is Acetyl-coenzyme A carboxylase carboxyl transferase subunit beta (296 aa).

The CoA carboxyltransferase N-terminal domain maps to 26 to 295 (VWTKCTNCEQ…PFKVGELIIE (270 aa)). Zn(2+)-binding residues include Cys-30, Cys-33, Cys-49, and Cys-52. The C4-type zinc finger occupies 30–52 (CTNCEQVLYSEELKRNMQVCPKC).

This sequence belongs to the AccD/PCCB family. As to quaternary structure, acetyl-CoA carboxylase is a heterohexamer composed of biotin carboxyl carrier protein (AccB), biotin carboxylase (AccC) and two subunits each of ACCase subunit alpha (AccA) and ACCase subunit beta (AccD). Zn(2+) serves as cofactor.

It is found in the cytoplasm. It catalyses the reaction N(6)-carboxybiotinyl-L-lysyl-[protein] + acetyl-CoA = N(6)-biotinyl-L-lysyl-[protein] + malonyl-CoA. It functions in the pathway lipid metabolism; malonyl-CoA biosynthesis; malonyl-CoA from acetyl-CoA: step 1/1. Component of the acetyl coenzyme A carboxylase (ACC) complex. Biotin carboxylase (BC) catalyzes the carboxylation of biotin on its carrier protein (BCCP) and then the CO(2) group is transferred by the transcarboxylase to acetyl-CoA to form malonyl-CoA. This is Acetyl-coenzyme A carboxylase carboxyl transferase subunit beta from Haemophilus ducreyi (strain 35000HP / ATCC 700724).